Consider the following 636-residue polypeptide: Threonine--tRNA ligase (636 aa).

The 63-residue stretch at 1–63 (MNEINVTLPD…ADGARVEIIT (63 aa)) folds into the TGS domain. A catalytic region spans residues 243-534 (DHRKLGRELD…LIEHFAGNFP (292 aa)). Cysteine 335, histidine 386, and histidine 511 together coordinate Zn(2+).

It belongs to the class-II aminoacyl-tRNA synthetase family. In terms of assembly, homodimer. Zn(2+) serves as cofactor.

The protein localises to the cytoplasm. The catalysed reaction is tRNA(Thr) + L-threonine + ATP = L-threonyl-tRNA(Thr) + AMP + diphosphate + H(+). Catalyzes the attachment of threonine to tRNA(Thr) in a two-step reaction: L-threonine is first activated by ATP to form Thr-AMP and then transferred to the acceptor end of tRNA(Thr). Also edits incorrectly charged L-seryl-tRNA(Thr). The sequence is that of Threonine--tRNA ligase from Citrifermentans bemidjiense (strain ATCC BAA-1014 / DSM 16622 / JCM 12645 / Bem) (Geobacter bemidjiensis).